The following is a 389-amino-acid chain: Flagellar P-ring protein (389 aa).

The signal sequence occupies residues 1-33 (MRPLVAARRRAAACCALAACMLALAFAPAAARA).

This sequence belongs to the FlgI family. The basal body constitutes a major portion of the flagellar organelle and consists of four rings (L,P,S, and M) mounted on a central rod.

Its subcellular location is the periplasm. The protein localises to the bacterial flagellum basal body. Its function is as follows. Assembles around the rod to form the L-ring and probably protects the motor/basal body from shearing forces during rotation. This chain is Flagellar P-ring protein, found in Burkholderia mallei (strain ATCC 23344).